The following is a 255-amino-acid chain: Antigen LPMC-61 (255 aa).

12 repeat units span residues 18-48, 49-57, 58-65, 66-78, 79-90, 91-103, 104-140, 141-152, 153-164, 165-172, 173-192, and 193-210. Residues 18–90 are disordered; the sequence is WPERQQQQQP…QQQPQMQQEQ (73 aa). A 12 X approximate tandem repeats, Gln-rich region spans residues 18–210; it reads WPERQQQQQP…QQQQQQQQQQ (193 aa). Residues 149–210 show a composition bias toward low complexity; it reads QQQQWPEQPE…QQQQQQQQQQ (62 aa). The tract at residues 149-224 is disordered; that stretch reads QQQQWPEQPE…DGVGIVVPYL (76 aa).

In terms of assembly, may be covalently linked by disulfide bonds to other polypeptides to form the 80 kDa antigen.

Functionally, unknown. The Gln-rich tandem repeats may be important for an unknown aspect of the parasitic life cycle. May be an important immunogen. The sequence is that of Antigen LPMC-61 from Eimeria tenella (Coccidian parasite).